We begin with the raw amino-acid sequence, 143 residues long: Large ribosomal subunit protein uL13 (143 aa).

The protein belongs to the universal ribosomal protein uL13 family. As to quaternary structure, part of the 50S ribosomal subunit.

Functionally, this protein is one of the early assembly proteins of the 50S ribosomal subunit, although it is not seen to bind rRNA by itself. It is important during the early stages of 50S assembly. The protein is Large ribosomal subunit protein uL13 of Albidiferax ferrireducens (strain ATCC BAA-621 / DSM 15236 / T118) (Rhodoferax ferrireducens).